The primary structure comprises 581 residues: Arginine--tRNA ligase (581 aa).

The 'HIGH' region signature appears at 126–136 (PNLAKEMHVGH).

It belongs to the class-I aminoacyl-tRNA synthetase family. As to quaternary structure, monomer.

It localises to the cytoplasm. The catalysed reaction is tRNA(Arg) + L-arginine + ATP = L-arginyl-tRNA(Arg) + AMP + diphosphate. The sequence is that of Arginine--tRNA ligase from Shewanella sp. (strain MR-4).